The primary structure comprises 317 residues: Cytochrome c biogenesis protein CcsA (317 aa).

8 helical membrane passes run 17–37 (VVSIVITIHLINLLVNEIVGL), 44–64 (GMIVTLFCITGFLIIRWIYSG), 71–91 (LYESLIFLSWNFSIINMLPYL), 101–121 (ITSPSTLFIQGFATSGLLTQI), 143–163 (MILSYASLLCGSLLSIALLVI), 223–243 (IISIGFLFLTIGILSGAVWAN), 252–272 (WDPKETWAFITWTIFAIYLHI), and 284–304 (AIVASIGFLIIWICYFGINIL).

Belongs to the CcmF/CycK/Ccl1/NrfE/CcsA family. In terms of assembly, may interact with Ccs1.

The protein resides in the plastid. It is found in the chloroplast thylakoid membrane. Functionally, required during biogenesis of c-type cytochromes (cytochrome c6 and cytochrome f) at the step of heme attachment. The chain is Cytochrome c biogenesis protein CcsA from Pelargonium hortorum (Common geranium).